Reading from the N-terminus, the 406-residue chain is Aspartokinase (406 aa).

The ACT domain occupies 342–406 (IIGHGIKNDL…LLKISETGHC (65 aa)).

It belongs to the aspartokinase family.

It catalyses the reaction L-aspartate + ATP = 4-phospho-L-aspartate + ADP. It participates in amino-acid biosynthesis; L-lysine biosynthesis via DAP pathway; (S)-tetrahydrodipicolinate from L-aspartate: step 1/4. It functions in the pathway amino-acid biosynthesis; L-methionine biosynthesis via de novo pathway; L-homoserine from L-aspartate: step 1/3. The protein operates within amino-acid biosynthesis; L-threonine biosynthesis; L-threonine from L-aspartate: step 1/5. This is Aspartokinase (lysC) from Rickettsia bellii (strain RML369-C).